A 463-amino-acid polypeptide reads, in one-letter code: Polyadenylate-binding protein-interacting protein 1 (463 aa).

Residues 1–86 (MSDGFERAPG…HKRTSPAAQL (86 aa)) are disordered. The MIF4G domain maps to 145–362 (TEYVQDFLNH…LKLVELRSSN (218 aa)). The tract at residues 420 to 442 (RDYDENGTDGGDSYFEDDDDNEM) is disordered. Over residues 433–442 (YFEDDDDNEM) the composition is skewed to acidic residues.

Interacts with the RRM1-RRM2 and C-terminal regions of epabp.

It is found in the cytoplasm. Its function is as follows. Acts as a coactivator in the regulation of translation initiation of poly(A)-containing mRNAs. The polypeptide is Polyadenylate-binding protein-interacting protein 1 (Xenopus laevis (African clawed frog)).